Consider the following 352-residue polypeptide: Guanidino acid hydrolase, mitochondrial (352 aa).

The N-terminal 35 residues, 1 to 35 (MLRLLASGCARGPGPGVGARPAAGLFHPGRRQSRQ), are a transit peptide targeting the mitochondrion. The segment at 11–49 (RGPGPGVGARPAAGLFHPGRRQSRQASDAPRNQPPSPEF) is disordered. Mn(2+)-binding residues include H162, D185, H187, and D189. Position 193 is an N6-acetyllysine (K193). N6-acetyllysine; alternate is present on K217. K217 bears the N6-succinyllysine; alternate mark. D276 and D278 together coordinate Mn(2+).

It belongs to the ureohydrolase superfamily. Arginase family. Requires Mn(2+) as cofactor. Highly expressed in liver and kidney. Also found in skeletal muscle, fetal liver, brain, testis, skin and the gastrointestinal tract. Within brain, expression is higher in the cerebral cortex with lower levels in the medulla and spinal cord.

Its subcellular location is the mitochondrion. The enzyme catalyses 3-guanidinopropanoate + H2O = urea + beta-alanine. The catalysed reaction is 4-guanidinobutanoate + H2O = urea + 4-aminobutanoate. It catalyses the reaction taurocyamine + H2O = urea + taurine. It carries out the reaction L-arginine + H2O = urea + L-ornithine. It functions in the pathway nitrogen metabolism; urea cycle; L-ornithine and urea from L-arginine: step 1/1. Functionally, hydrolyzes linear guanidino acids to form urea and the corresponding amines. Displays specificity for substrates having a negatively charged head group and short chains including taurocyamine, guanidino propanoic and butanoic acids. May protect cells by detoxifying potentially harmful amounts of guanidino acids. Metabolizes L-arginine with low efficiency. This Homo sapiens (Human) protein is Guanidino acid hydrolase, mitochondrial (AGMAT).